The following is a 574-amino-acid chain: Proline--tRNA ligase (574 aa).

It belongs to the class-II aminoacyl-tRNA synthetase family. ProS type 1 subfamily. Homodimer.

It localises to the cytoplasm. The enzyme catalyses tRNA(Pro) + L-proline + ATP = L-prolyl-tRNA(Pro) + AMP + diphosphate. Functionally, catalyzes the attachment of proline to tRNA(Pro) in a two-step reaction: proline is first activated by ATP to form Pro-AMP and then transferred to the acceptor end of tRNA(Pro). As ProRS can inadvertently accommodate and process non-cognate amino acids such as alanine and cysteine, to avoid such errors it has two additional distinct editing activities against alanine. One activity is designated as 'pretransfer' editing and involves the tRNA(Pro)-independent hydrolysis of activated Ala-AMP. The other activity is designated 'posttransfer' editing and involves deacylation of mischarged Ala-tRNA(Pro). The misacylated Cys-tRNA(Pro) is not edited by ProRS. The protein is Proline--tRNA ligase of Pseudoalteromonas translucida (strain TAC 125).